The sequence spans 338 residues: uncharacterized protein (338 aa).

Positions 1-29 are cleaved as a signal peptide; the sequence is MIKQLCKNITICTLALSTTFTVLPATSFA.

The protein belongs to the aerolysin family.

This is an uncharacterized protein from Staphylococcus aureus (strain USA300).